The sequence spans 449 residues: tRNA-2-methylthio-N(6)-dimethylallyladenosine synthase (449 aa).

The region spanning 13 to 128 is the MTTase N-terminal domain; that stretch reads RRIFIETYGC…LPHLIGTVEK (116 aa). [4Fe-4S] cluster is bound by residues C22, C58, C92, C166, C170, and C173. Positions 152-383 constitute a Radical SAM core domain; it reads SRIKISGFIS…ITLQLKISLM (232 aa). The 64-residue stretch at 386 to 449 folds into the TRAM domain; it reads KENIGKTMEI…AATLFGDPKL (64 aa).

This sequence belongs to the methylthiotransferase family. MiaB subfamily. Monomer. The cofactor is [4Fe-4S] cluster.

It localises to the cytoplasm. It catalyses the reaction N(6)-dimethylallyladenosine(37) in tRNA + (sulfur carrier)-SH + AH2 + 2 S-adenosyl-L-methionine = 2-methylsulfanyl-N(6)-dimethylallyladenosine(37) in tRNA + (sulfur carrier)-H + 5'-deoxyadenosine + L-methionine + A + S-adenosyl-L-homocysteine + 2 H(+). Functionally, catalyzes the methylthiolation of N6-(dimethylallyl)adenosine (i(6)A), leading to the formation of 2-methylthio-N6-(dimethylallyl)adenosine (ms(2)i(6)A) at position 37 in tRNAs that read codons beginning with uridine. This is tRNA-2-methylthio-N(6)-dimethylallyladenosine synthase from Azobacteroides pseudotrichonymphae genomovar. CFP2.